A 218-amino-acid chain; its full sequence is Adenylate kinase (218 aa).

Residue 10–15 (GAGKGT) participates in ATP binding. The segment at 30–59 (STGDMLRAAVKAGTPLGIEAKKVMDAGGLV) is NMP. Residues threonine 31, arginine 36, 57–59 (GLV), 85–88 (GFPR), and glutamine 92 each bind AMP. Residues 122–159 (GRRSHAASGRTYHVKFNPPKVAGVDDVTGEPLIQRDDD) form an LID region. Residues arginine 123 and 132–133 (TY) each bind ATP. AMP is bound by residues arginine 156 and arginine 167. Glycine 203 serves as a coordination point for ATP.

The protein belongs to the adenylate kinase family. Monomer.

Its subcellular location is the cytoplasm. It catalyses the reaction AMP + ATP = 2 ADP. It participates in purine metabolism; AMP biosynthesis via salvage pathway; AMP from ADP: step 1/1. Functionally, catalyzes the reversible transfer of the terminal phosphate group between ATP and AMP. Plays an important role in cellular energy homeostasis and in adenine nucleotide metabolism. This is Adenylate kinase from Albidiferax ferrireducens (strain ATCC BAA-621 / DSM 15236 / T118) (Rhodoferax ferrireducens).